We begin with the raw amino-acid sequence, 367 residues long: Phosphoribosylaminoimidazole-succinocarboxamide synthase (367 aa).

The protein belongs to the SAICAR synthetase family.

The catalysed reaction is 5-amino-1-(5-phospho-D-ribosyl)imidazole-4-carboxylate + L-aspartate + ATP = (2S)-2-[5-amino-1-(5-phospho-beta-D-ribosyl)imidazole-4-carboxamido]succinate + ADP + phosphate + 2 H(+). The protein operates within purine metabolism; IMP biosynthesis via de novo pathway; 5-amino-1-(5-phospho-D-ribosyl)imidazole-4-carboxamide from 5-amino-1-(5-phospho-D-ribosyl)imidazole-4-carboxylate: step 1/2. This chain is Phosphoribosylaminoimidazole-succinocarboxamide synthase, found in Shewanella sp. (strain MR-7).